Consider the following 66-residue polypeptide: MKRKDTLKDFRGKSIDQLQEAKIELLQQLFSLRMQKGTGQLKKNHLFKSAKRDIARINTIISEKNK.

The protein belongs to the universal ribosomal protein uL29 family.

This Francisella philomiragia subsp. philomiragia (strain ATCC 25017 / CCUG 19701 / FSC 153 / O#319-036) protein is Large ribosomal subunit protein uL29.